We begin with the raw amino-acid sequence, 256 residues long: Hemin import ATP-binding protein HmuV (256 aa).

The region spanning 2 to 238 is the ABC transporter domain; the sequence is ISAQNLVYSL…QALTMLYGAD (237 aa). 34–41 lines the ATP pocket; sequence GPNGAGKS.

Belongs to the ABC transporter superfamily. Heme (hemin) importer (TC 3.A.1.14.5) family. In terms of assembly, the complex is composed of two ATP-binding proteins (HmuV), two transmembrane proteins (HmuU) and a solute-binding protein (HmuT).

Its subcellular location is the cell inner membrane. Its function is as follows. Part of the ABC transporter complex HmuTUV involved in hemin import. Responsible for energy coupling to the transport system. This is Hemin import ATP-binding protein HmuV from Escherichia coli O157:H7.